A 262-amino-acid polypeptide reads, in one-letter code: Nitrate transport protein NasD (262 aa).

In terms of domain architecture, ABC transporter spans 5–239 (IQVQGVSQRF…RPRNRVQLAD (235 aa)). 41–48 (GHSGCGKS) serves as a coordination point for ATP.

This sequence belongs to the ABC transporter superfamily.

The protein localises to the cell membrane. In terms of biological role, probably part of a high-affinity binding-protein-dependent transport system for nitrate. Probably responsible for energy coupling to the transport system. This is Nitrate transport protein NasD (nasD) from Klebsiella oxytoca.